An 88-amino-acid polypeptide reads, in one-letter code: MGSLSPWHWVVLVVVVVLLFGAKKLPDAARSLGKSMRIFKSELREMQTENQAQASALETPMQNPTVVQSQRVVPPWSTEQDHTEARPA.

A helical transmembrane segment spans residues 1-21; that stretch reads MGSLSPWHWVVLVVVVVLLFG. The span at 49-71 shows a compositional bias: polar residues; it reads ENQAQASALETPMQNPTVVQSQR. A disordered region spans residues 49-88; it reads ENQAQASALETPMQNPTVVQSQRVVPPWSTEQDHTEARPA. The segment covering 79–88 has biased composition (basic and acidic residues); sequence EQDHTEARPA.

This sequence belongs to the TatA/E family. As to quaternary structure, the Tat system comprises two distinct complexes: a TatABC complex, containing multiple copies of TatA, TatB and TatC subunits, and a separate TatA complex, containing only TatA subunits. Substrates initially bind to the TatABC complex, which probably triggers association of the separate TatA complex to form the active translocon.

The protein resides in the cell membrane. In terms of biological role, part of the twin-arginine translocation (Tat) system that transports large folded proteins containing a characteristic twin-arginine motif in their signal peptide across membranes. TatA could form the protein-conducting channel of the Tat system. The sequence is that of Sec-independent protein translocase protein TatA from Mycobacterium leprae (strain TN).